Here is a 1018-residue protein sequence, read N- to C-terminus: D-2-hydroxyglutarate dehydrogenase (1018 aa).

Positions 48 to 281 (YQLLPDAVVF…TEARLDITRL (234 aa)) constitute an FAD-binding PCMH-type domain. (R)-2-hydroxyglutarate-binding residues include R402 and H500. The 34-residue stretch at 662–695 (FSHEVKEAMSGCLACKACSTQCPIKIDVPEFRSR) folds into the 4Fe-4S ferredoxin-type domain. [4Fe-4S] cluster is bound by residues C673, C676, C679, and C683.

It in the N-terminal section; belongs to the FAD-binding oxidoreductase/transferase type 4 family. As to quaternary structure, homotetramer. Requires [4Fe-4S] cluster as cofactor. It depends on FAD as a cofactor.

The enzyme catalyses (R)-2-hydroxyglutarate + A = 2-oxoglutarate + AH2. Its activity is regulated as follows. Activity is completely inhibited by the addition of 0.5 mM Mn(2+), Ni(2+), or Co(2+) and partially inhibited by 0.5 mM Zn(2+). Its function is as follows. Catalyzes the oxidation of D-2-hydroxyglutarate (D-2-HGA) to 2-oxoglutarate. Appears to be the only D2HGDH in E.coli, providing the way to recycle D-2-HGA produced during L-serine synthesis by SerA, by converting it back to 2-oxoglutarate. The physiological molecule that functions as the primary electron acceptor during D-2-HGA oxidation by YdiJ in E.coli is unknown. Shows strict substrate specificity towards D-2-HGA, since it has no detectable activity on L-2-hydroxyglutarate, L-malate, D-malate, L-lactate, D-lactate, L-tartrate, D-tartrate, L-glycerate, D-glycerate, glutarate, or pyruvate. In Escherichia coli (strain K12), this protein is D-2-hydroxyglutarate dehydrogenase (ydiJ).